We begin with the raw amino-acid sequence, 1105 residues long: MFLVNAPPLASFQTKWAPFGQTTACRIPVSFSESEEDISRATISTQVQGIISTLQSDESSLEVTVEHEGIMQKTRKGDFNIERGLKTNAAVLKGHTRESATLVVPAEFRDNKDDHSEFGPLMLESDSDDSVDRDIEEAIQEYLKKKDTGEASNEGLNTTSSTSVEHGVLLNDAQNFAAANTCPVSMVTTSDICNSFRLKEQQRSSSPVSVSSDDSFEQSIKAEIEQFLNDKKQQKSKSKISSPPKVPCIETQSKPKLKTSKTSEKQNSKQAGSELLRKHASDSKLLRPSPETTKIQPKACVLKQNTKTSSPSPKSTPIVKEEPSDSSSDDGIEEAIQLYQLEKRRQGITPTVTPEKVKSPTSANSLTHFESRKRKSLNNKLAASQDISNCQPLLSKRPVLSEEDSFSKREIGAPTTCRAETAAELMCAEAILDISKTILPSQPQSTYVIPTEPPPPPPEPQCDSDSLVDSDDSIEQEIRTFLARKAQVEGAGISPVKLETTIETSPELGSQSSKLSLTHKRKAKAMQSDLMRKTLPLDKLGSNVELNQYPQPDERLQSSGKFAAKLSAPSEIHMGAGESIVIPEVSTALNRGRGRSHGLTRSYSSGDKSSSLDSDEDLDTAIKDLLKSKRKYKKRPKDGKSQCKKRVRFDETISKPVEISEDSKQPPKDPPFIKSCLLNSSTAKENSLEKSKKRREEKAVERNIPSCSSSPQGNKDGQPMPACASNEPNSKTRALDDAHESSSVDSDDGIEQEIRKFLAERAKVSSALTAAQNEAVSDSNIEKNTQTLKQEQAVLLNPVPETALQPEPCANISTAATAQASVVQLLALHSGKQSLLPVRLFNTRPVEVRTGMSPQSTPNCFIIKKECLVEQNSIIKPIEQCLPTAPGRVITQANLNSPQNFPVAGNFVAGLKYVSGTEKQLLLNVGHTGPSKLATEICKSMVHNSRLANCPPLDRKGPALERSKELPAISIIPKSPLVRSGLYLLTTKVCKENSPSLCLPINTTAYKTGINLMSIQYCQVNTQKPPCVGELSVNQPKSAESRVSVPGHATNPPLFVTRSREFKAAREGVEREGRTNLNKAASHDLVADSVKKVKEIKNSQESKNV.

Disordered stretches follow at residues 228–382 (LNDK…NKLA), 444–468 (QSTYVIPTEPPPPPPEPQCDSDSLV), 504–526 (TSPELGSQSSKLSLTHKRKAKAM), and 589–748 (LNRG…DSDD). Residues 275–285 (LLRKHASDSKL) show a composition bias toward basic and acidic residues. The segment covering 306–317 (TKTSSPSPKSTP) has biased composition (low complexity). Residues 359–368 (SPTSANSLTH) are compositionally biased toward polar residues. The segment covering 451–460 (TEPPPPPPEP) has biased composition (pro residues). A compositionally biased stretch (polar residues) spans 504–516 (TSPELGSQSSKLS). The span at 602–612 (SYSSGDKSSSL) shows a compositional bias: low complexity. The segment covering 628-647 (SKRKYKKRPKDGKSQCKKRV) has biased composition (basic residues). A compositionally biased stretch (basic and acidic residues) spans 686-701 (NSLEKSKKRREEKAVE). Positions 705-715 (PSCSSSPQGNK) are enriched in polar residues. A compositionally biased stretch (basic and acidic residues) spans 733–742 (RALDDAHESS).

The protein resides in the nucleus. Its subcellular location is the nucleolus. In terms of biological role, may inhibit phosphatase activity of protein phosphatase 1 (PP1) complexes. May positively regulate cell proliferation. The sequence is that of Protein phosphatase 1 regulatory subunit 26 (ppp1r26) from Xenopus laevis (African clawed frog).